Consider the following 228-residue polypeptide: Ephrin-A5 (228 aa).

Residues 1–20 (MPHVEMLLLAVAALWVCVRG) form the signal peptide. Residues 29–162 (ADRYAVYWNS…KLKVFVRPAN (134 aa)) form the Ephrin RBD domain. Asn-37 carries N-linked (GlcNAc...) asparagine glycosylation. 2 disulfide bridges follow: Cys-62/Cys-102 and Cys-90/Cys-151. Residue Asn-203 is the site of GPI-anchor amidated asparagine attachment. The propeptide at 204 to 228 (AAQTPRIPIRLLATLLFLLAMLLIL) is removed in mature form.

This sequence belongs to the ephrin family. Expressed in a graded fashion across the tectum being more strongly expressed towards the posterior pole.

It is found in the cell membrane. Cell surface GPI-bound ligand for Eph receptors, a family of receptor tyrosine kinases which are crucial for migration, repulsion and adhesion during neuronal, vascular and epithelial development. Binds promiscuously Eph receptors residing on adjacent cells, leading to contact-dependent bidirectional signaling into neighboring cells. Induces compartmentalized signaling within a caveolae-like membrane microdomain when bound to the extracellular domain of its cognate receptor. This signaling event requires the activity of the Fyn tyrosine kinase. Activates the EPHA3 receptor to regulate cell-cell adhesion and cytoskeletal organization. With the receptor EPHA2 may regulate lens fiber cells shape and interactions and be important for lens transparency maintenance. May function actively to stimulate axon fasciculation. Induces growth cone collapse and repulsion of retinal ganglion cell axons. The chain is Ephrin-A5 (EFNA5) from Gallus gallus (Chicken).